A 303-amino-acid chain; its full sequence is Coenzyme PQQ synthesis protein B (303 aa).

This sequence belongs to the PqqB family.

It participates in cofactor biosynthesis; pyrroloquinoline quinone biosynthesis. Its function is as follows. May be involved in the transport of PQQ or its precursor to the periplasm. The protein is Coenzyme PQQ synthesis protein B of Acinetobacter baumannii (strain AB0057).